A 24-amino-acid polypeptide reads, in one-letter code: Heptapoietin A light chain (24 aa).

Heterodimer of a heavy and a light chain linked by disulfide bond(s).

Functionally, HPTA is an acidic heparin-binding growth factor for hepatocytes. This is Heptapoietin A light chain from Oryctolagus cuniculus (Rabbit).